The primary structure comprises 402 residues: Zinc finger CCCH domain-containing protein 35 (402 aa).

2 C3H1-type zinc fingers span residues 117 to 144 and 152 to 176; these read CYSGTACPDFRKGGCKRGDACEFAHGVF and RYRTQPCKDGTACRRRVCFFAHTPD. 2 disordered regions span residues 180-211 and 232-258; these read VLPPSQQQGSNSPRGCGGGGAGAAASPLAESY and SSPTSTLVSPPRSPPSESPPLSPDAAG. Polar residues predominate over residues 183–192; that stretch reads PSQQQGSNSP. Low complexity predominate over residues 232-241; it reads SSPTSTLVSP. Residues 242-253 are compositionally biased toward pro residues; the sequence is PRSPPSESPPLS.

The sequence is that of Zinc finger CCCH domain-containing protein 35 from Oryza sativa subsp. japonica (Rice).